Reading from the N-terminus, the 505-residue chain is ATP synthase subunit beta, mitochondrial (505 aa).

The transit peptide at 1–31 (MFALRAASKADKNLLPFLGQLSRSHAAKAAK) directs the protein to the mitochondrion. Residue 183 to 190 (GGAGVGKT) coordinates ATP.

It belongs to the ATPase alpha/beta chains family. As to quaternary structure, F-type ATPases have 2 components, CF(1) - the catalytic core - and CF(0) - the membrane proton channel. CF(1) has five subunits: alpha(3), beta(3), gamma(1), delta(1), epsilon(1). CF(0) has three main subunits: a, b and c.

Its subcellular location is the mitochondrion. It localises to the mitochondrion inner membrane. The catalysed reaction is ATP + H2O + 4 H(+)(in) = ADP + phosphate + 5 H(+)(out). Mitochondrial membrane ATP synthase (F(1)F(0) ATP synthase or Complex V) produces ATP from ADP in the presence of a proton gradient across the membrane which is generated by electron transport complexes of the respiratory chain. F-type ATPases consist of two structural domains, F(1) - containing the extramembraneous catalytic core, and F(0) - containing the membrane proton channel, linked together by a central stalk and a peripheral stalk. During catalysis, ATP synthesis in the catalytic domain of F(1) is coupled via a rotary mechanism of the central stalk subunits to proton translocation. Subunits alpha and beta form the catalytic core in F(1). Rotation of the central stalk against the surrounding alpha(3)beta(3) subunits leads to hydrolysis of ATP in three separate catalytic sites on the beta subunits. The protein is ATP synthase subunit beta, mitochondrial of Drosophila melanogaster (Fruit fly).